Here is a 75-residue protein sequence, read N- to C-terminus: Large ribosomal subunit protein bL28 (75 aa).

Belongs to the bacterial ribosomal protein bL28 family.

In Buchnera aphidicola subsp. Acyrthosiphon pisum (strain 5A), this protein is Large ribosomal subunit protein bL28.